Here is a 962-residue protein sequence, read N- to C-terminus: Glycine dehydrogenase (decarboxylating) (962 aa).

Residue Lys-709 is modified to N6-(pyridoxal phosphate)lysine.

It belongs to the GcvP family. The glycine cleavage system is composed of four proteins: P, T, L and H. It depends on pyridoxal 5'-phosphate as a cofactor.

The catalysed reaction is N(6)-[(R)-lipoyl]-L-lysyl-[glycine-cleavage complex H protein] + glycine + H(+) = N(6)-[(R)-S(8)-aminomethyldihydrolipoyl]-L-lysyl-[glycine-cleavage complex H protein] + CO2. Its function is as follows. The glycine cleavage system catalyzes the degradation of glycine. The P protein binds the alpha-amino group of glycine through its pyridoxal phosphate cofactor; CO(2) is released and the remaining methylamine moiety is then transferred to the lipoamide cofactor of the H protein. This chain is Glycine dehydrogenase (decarboxylating), found in Shewanella pealeana (strain ATCC 700345 / ANG-SQ1).